Reading from the N-terminus, the 84-residue chain is Delta-stichotoxin-Shd3a (84 aa).

The signal sequence occupies residues 1 to 19 (MAYLKIVLVALMLVLGVSA). Residues 20–33 (MRLSDQEDQDVSVV) constitute a propeptide that is removed on maturation. 3 disulfide bridges follow: cysteine 38/cysteine 78, cysteine 40/cysteine 68, and cysteine 61/cysteine 79. Lysine amide is present on lysine 83.

It belongs to the sea anemone sodium channel inhibitory toxin family. Type II subfamily.

The protein localises to the secreted. The protein resides in the nematocyst. Its function is as follows. Binds specifically to voltage-gated sodium channels (Nav), thereby delaying their inactivation during signal transduction. The chain is Delta-stichotoxin-Shd3a from Stichodactyla haddoni (Saddle carpet anemone).